We begin with the raw amino-acid sequence, 143 residues long: uncharacterized protein (143 aa).

The first 16 residues, 1–16 (MSRNRLFLVAGSLAVA), serve as a signal peptide directing secretion. Residues 114–134 (GAYVFLGPGFTPGSPSGGSGG) form a helical membrane-spanning segment.

Its subcellular location is the membrane. This is an uncharacterized protein from Mycobacterium tuberculosis (strain CDC 1551 / Oshkosh).